Consider the following 503-residue polypeptide: Aminoaldehyde dehydrogenase 2, peroxisomal (503 aa).

Ile-28, Asp-99, and Leu-189 together coordinate Na(+). 238 to 245 contacts NAD(+); it reads GSTMTGSK. Glu-260 functions as the Proton acceptor in the catalytic mechanism. The NAD(+) site is built by Cys-294 and Glu-393. Cys-294 (nucleophile) is an active-site residue. Positions 501 to 503 match the Microbody targeting signal motif; it reads SKL.

It belongs to the aldehyde dehydrogenase family. As to expression, expressed in leaves, flowers and fruits.

It is found in the peroxisome. It catalyses the reaction 4-aminobutanal + NAD(+) + H2O = 4-aminobutanoate + NADH + 2 H(+). The enzyme catalyses 3-aminopropanal + NAD(+) + H2O = beta-alanine + NADH + 2 H(+). It participates in amine and polyamine biosynthesis; betaine biosynthesis via choline pathway; betaine from betaine aldehyde: step 1/1. Its function is as follows. Dehydrogenase that catalyzes the oxidation of several aminoaldehydes. Metabolizes and detoxifies aldehyde products of polyamine degradation to non-toxic amino acids. Catalyzes the oxidation of 4-aminobutanal and 3-aminopropanal to 4-aminobutanoate and beta-alanine, respectively. The chain is Aminoaldehyde dehydrogenase 2, peroxisomal from Malus domestica (Apple).